A 104-amino-acid polypeptide reads, in one-letter code: Large ribosomal subunit protein uL24 (104 aa).

This sequence belongs to the universal ribosomal protein uL24 family. As to quaternary structure, part of the 50S ribosomal subunit.

Its function is as follows. One of two assembly initiator proteins, it binds directly to the 5'-end of the 23S rRNA, where it nucleates assembly of the 50S subunit. In terms of biological role, one of the proteins that surrounds the polypeptide exit tunnel on the outside of the subunit. The polypeptide is Large ribosomal subunit protein uL24 (Shewanella oneidensis (strain ATCC 700550 / JCM 31522 / CIP 106686 / LMG 19005 / NCIMB 14063 / MR-1)).